We begin with the raw amino-acid sequence, 427 residues long: Glutamate-1-semialdehyde 2,1-aminomutase (427 aa).

Position 267 is an N6-(pyridoxal phosphate)lysine (K267).

This sequence belongs to the class-III pyridoxal-phosphate-dependent aminotransferase family. HemL subfamily. In terms of assembly, homodimer. It depends on pyridoxal 5'-phosphate as a cofactor.

It is found in the cytoplasm. It catalyses the reaction (S)-4-amino-5-oxopentanoate = 5-aminolevulinate. It participates in porphyrin-containing compound metabolism; protoporphyrin-IX biosynthesis; 5-aminolevulinate from L-glutamyl-tRNA(Glu): step 2/2. The sequence is that of Glutamate-1-semialdehyde 2,1-aminomutase from Desulfosudis oleivorans (strain DSM 6200 / JCM 39069 / Hxd3) (Desulfococcus oleovorans).